Here is a 507-residue protein sequence, read N- to C-terminus: Maturase K (507 aa).

The protein belongs to the intron maturase 2 family. MatK subfamily.

It localises to the plastid. The protein localises to the chloroplast. Its function is as follows. Usually encoded in the trnK tRNA gene intron. Probably assists in splicing its own and other chloroplast group II introns. In Annona muricata (Soursop), this protein is Maturase K.